Here is a 173-residue protein sequence, read N- to C-terminus: Ribosome maturation factor RimM (173 aa).

Positions 97-171 constitute a PRC barrel domain; it reads EGEFFYHEII…QITIEPMEGL (75 aa).

Belongs to the RimM family. As to quaternary structure, binds ribosomal protein uS19.

It is found in the cytoplasm. Its function is as follows. An accessory protein needed during the final step in the assembly of 30S ribosomal subunit, possibly for assembly of the head region. Essential for efficient processing of 16S rRNA. May be needed both before and after RbfA during the maturation of 16S rRNA. It has affinity for free ribosomal 30S subunits but not for 70S ribosomes. The polypeptide is Ribosome maturation factor RimM (Halalkalibacterium halodurans (strain ATCC BAA-125 / DSM 18197 / FERM 7344 / JCM 9153 / C-125) (Bacillus halodurans)).